A 706-amino-acid polypeptide reads, in one-letter code: Probable protein S-acyltransferase 20 (706 aa).

Helical transmembrane passes span 16–36 and 41–61; these read VIAI…FAPF and IWEY…FVLY. The region spanning 172–222 is the DHHC domain; it reads LFCTLCNCEVRKFSKHCRSCDKCVDCFDHHCKWLNNCVGRKNYVTFVSLMS. Residue C202 is the S-palmitoyl cysteine intermediate of the active site. A run of 2 helical transmembrane segments spans residues 220-240 and 275-295; these read LMSA…AVIV and AVAI…MLLI. 3 disordered regions span residues 470–505, 591–621, and 680–706; these read SSLS…HVHE, LNPS…ALRD, and RDST…SNIK. Composition is skewed to polar residues over residues 492–501, 591–603, and 697–706; these read HGMSNLSSPS, LNPS…TQNP, and ANSQTGSNIK.

It belongs to the DHHC palmitoyltransferase family.

It is found in the cell membrane. Its subcellular location is the cytoplasmic vesicle membrane. It catalyses the reaction L-cysteinyl-[protein] + hexadecanoyl-CoA = S-hexadecanoyl-L-cysteinyl-[protein] + CoA. Palmitoyl acyltransferase. The protein is Probable protein S-acyltransferase 20 (PAT20) of Arabidopsis thaliana (Mouse-ear cress).